Here is a 289-residue protein sequence, read N- to C-terminus: D-xylonolactone lactonase (289 aa).

A Fe(2+)-binding site is contributed by Glu-17. D-xylono-1,5-lactone-binding residues include Arg-98, Asn-100, Glu-119, and Asn-145. Residues Asn-145 and Asp-195 each contribute to the Fe(2+) site. The active-site Proton donor/acceptor is the Asp-195.

The protein belongs to the SMP-30/CGR1 family. Fe(2+) serves as cofactor.

It catalyses the reaction D-xylono-1,5-lactone + H2O = D-xylonate + H(+). Its function is as follows. Involved in the degradation of D-xylose. Catalyzes the hydrolysis of D-xylonolactone to D-xylonate. This chain is D-xylonolactone lactonase, found in Caulobacter vibrioides (strain ATCC 19089 / CIP 103742 / CB 15) (Caulobacter crescentus).